A 730-amino-acid chain; its full sequence is 1,4-alpha-glucan branching enzyme GlgB (730 aa).

Asp-405 (nucleophile) is an active-site residue. The active-site Proton donor is Glu-458.

This sequence belongs to the glycosyl hydrolase 13 family. GlgB subfamily. In terms of assembly, monomer.

The enzyme catalyses Transfers a segment of a (1-&gt;4)-alpha-D-glucan chain to a primary hydroxy group in a similar glucan chain.. The protein operates within glycan biosynthesis; glycogen biosynthesis. Functionally, catalyzes the formation of the alpha-1,6-glucosidic linkages in glycogen by scission of a 1,4-alpha-linked oligosaccharide from growing alpha-1,4-glucan chains and the subsequent attachment of the oligosaccharide to the alpha-1,6 position. The polypeptide is 1,4-alpha-glucan branching enzyme GlgB (Haemophilus influenzae (strain 86-028NP)).